The primary structure comprises 209 residues: Ion-translocating oxidoreductase complex subunit G (209 aa).

Residues 9-29 (GLVLAIFACASTGLVAVTHYL) traverse the membrane as a helical segment. Position 175 is an FMN phosphoryl threonine (threonine 175).

This sequence belongs to the RnfG family. As to quaternary structure, the complex is composed of six subunits: RnfA, RnfB, RnfC, RnfD, RnfE and RnfG. Requires FMN as cofactor.

It is found in the cell inner membrane. In terms of biological role, part of a membrane-bound complex that couples electron transfer with translocation of ions across the membrane. The polypeptide is Ion-translocating oxidoreductase complex subunit G (Vibrio atlanticus (strain LGP32) (Vibrio splendidus (strain Mel32))).